We begin with the raw amino-acid sequence, 445 residues long: MSFRSIVRDVRDSFGSLSRRSFEVTLAGLSGLTGHHRGKSQSTVHELCDADLIIQESRWASLPPELLRDVIRRLEASESTWPSRKDVVSCAAVCKAWREMCKEIVLSPEFCGKLTFPLSLKQPGPRDGMIQCFIKRDKSKSTYHLYLCLSTAVLADSGKFLLSAKRHRKTTCTEYVISMDADNISRSSSTYIGKLRSNFLGTKFIIYDTQPSYNGAVIPPVGRSSRRFNSKKVSPKMPSGSYNIAQVTYELNVLGTRGPRRMHCVMHSIPASSVEPGGIVPGQPEQIVPRAFEESFRSTTSFSKSSIMDRSMDFSSSRDFSSARFSDIAGGTINGDEEGQNKERPLVLRNKAPRWHEQLQCWCLNFRGRVTIASVKNFQLIAAPAQPPAGAPTPSQPAPPEQDKIILQFGKVAKDMFTMDYRYPLSAFQAFAICLSSFDTKLACE.

The F-box domain occupies 56-102; that stretch reads ESRWASLPPELLRDVIRRLEASESTWPSRKDVVSCAAVCKAWREMCK.

Belongs to the TUB family. Ubiquitous.

This chain is Tubby-like F-box protein 8 (TULP8), found in Oryza sativa subsp. japonica (Rice).